The following is a 3364-amino-acid chain: Salivary gland surface protein 1 (3364 aa).

Beta-propeller regions lie at residues 1–344 (MLRI…VVDA) and 705–1216 (FEQE…LKAL). N-linked (GlcNAc...) asparagine glycosylation is present at asparagine 59. Disulfide bonds link cysteine 251–cysteine 297 and cysteine 1128–cysteine 1139. Positions 345 to 2733 (VEPKLDQGSP…PVSQIDPDGQ (2389 aa)) are rhs/YD-repeats. Residue asparagine 1149 is glycosylated (N-linked (GlcNAc...) asparagine). The carbohydrate-binding module (CBM) stretch occupies residues 1345–1494 (NQELVQFLGF…VHVDHVRLSP (150 aa)). A lectin carbohydrate-recognition domain (lectin-CRD) region spans residues 1575 to 1715 (HSWVESFSPY…VGIKDVIVME (141 aa)). The wedge domain stretch occupies residues 2225–2304 (HDKCDQNLIP…SEKMLEQGYP (80 aa)). 2 disulfide bridges follow: cysteine 2253–cysteine 2285 and cysteine 2407–cysteine 2421. Helical transmembrane passes span 2734 to 2754 (IAVTLVLMIIGAIVGAYLGAA), 2774 to 2794 (IGLFAGAIMGAFAVYGGAATF), 2805 to 2825 (MIAGALATGVISVAGAFLGAA), 2844 to 2864 (WNGLLSGASIAVSFPSGFVGI), and 2878 to 2898 (MIYASLMVGGFLLFVYLGGGM). The tox-SGS stretch occupies residues 3126 to 3216 (YSPDSDGNQI…ARIAPAALRN (91 aa)).

In terms of processing, probably cleaved at the C-terminus. Female saliva (at protein level). Female salivary gland (at protein level). Not detected in female carcass without salivary glands. Not detected in male tissues.

Its subcellular location is the cell membrane. It is found in the secreted. Its function is as follows. (Microbial infection) Facilitates, but is not essential for, invasion of salivary glands by Plasmodium gallinaceum. Plays a role in Plasmodium gallinaceum oocyst development in mosquito midgut. In terms of biological role, (Microbial infection) Probably facilitates Zika virus replication in salivary glands. The polypeptide is Salivary gland surface protein 1 (Aedes aegypti (Yellowfever mosquito)).